Here is a 245-residue protein sequence, read N- to C-terminus: 14-3-3 protein theta (245 aa).

At M1 the chain carries N-acetylmethionine. K3 is modified (N6-acetyllysine). Residue K49 is modified to N6-acetyllysine; alternate. Residue K49 forms a Glycyl lysine isopeptide (Lys-Gly) (interchain with G-Cter in SUMO2); alternate linkage. K68 is modified (N6-acetyllysine). Y82 bears the 3'-nitrotyrosine mark. S92 is subject to Phosphoserine. Residue Y104 is modified to 3'-nitrotyrosine. K115 is modified (N6-acetyllysine). Phosphoserine; by CK1 is present on S232.

This sequence belongs to the 14-3-3 family. As to quaternary structure, homodimer. Interacts with CDK16. Interacts with RGS7 (phosphorylated form). Interacts with SSH1. Interacts with CDKN1B ('Thr-198' phosphorylated form); the interaction translocates CDKN1B to the cytoplasm. Interacts with GAB2. Interacts with the 'Ser-241' phosphorylated form of PDPK1. Interacts with the 'Thr-369' phosphorylated form of DAPK2. Interacts with PI4KB, TBC1D22A and TBC1D22B. Interacts with SLITRK1. Interacts with RIPOR2. Interacts with INAVA; the interaction increases upon PRR (pattern recognition receptor) stimulation and is required for cellular signaling pathway activation and cytokine secretion. Interacts with MARK2, MARK3 and MARK4. Interacts with MEFV.

The protein localises to the cytoplasm. In terms of biological role, adapter protein implicated in the regulation of a large spectrum of both general and specialized signaling pathways. Binds to a large number of partners, usually by recognition of a phosphoserine or phosphothreonine motif. Binding generally results in the modulation of the activity of the binding partner. Negatively regulates the kinase activity of PDPK1. The polypeptide is 14-3-3 protein theta (YWHAQ) (Bos taurus (Bovine)).